The primary structure comprises 95 residues: Histone-like DNA-binding protein (95 aa).

It belongs to the bacterial histone-like protein family.

This Rickettsia montanensis protein is Histone-like DNA-binding protein.